A 278-amino-acid chain; its full sequence is Undecaprenyl-diphosphatase 2 (278 aa).

7 consecutive transmembrane segments (helical) span residues 43–63 (GAAF…VYFW), 88–108 (ARLG…GLFF), 119–139 (LYIT…ADRI), 149–169 (LIWR…IPGV), 194–214 (FLLA…KSIG), 226–246 (LATL…LKLV), and 254–274 (FVWY…TGVI).

This sequence belongs to the UppP family.

The protein localises to the cell inner membrane. It carries out the reaction di-trans,octa-cis-undecaprenyl diphosphate + H2O = di-trans,octa-cis-undecaprenyl phosphate + phosphate + H(+). Functionally, catalyzes the dephosphorylation of undecaprenyl diphosphate (UPP). Confers resistance to bacitracin. The sequence is that of Undecaprenyl-diphosphatase 2 from Agrobacterium fabrum (strain C58 / ATCC 33970) (Agrobacterium tumefaciens (strain C58)).